Here is a 286-residue protein sequence, read N- to C-terminus: Ribosomal RNA small subunit methyltransferase A (286 aa).

6 residues coordinate S-adenosyl-L-methionine: N28, L30, G55, E77, D103, and N123.

This sequence belongs to the class I-like SAM-binding methyltransferase superfamily. rRNA adenine N(6)-methyltransferase family. RsmA subfamily.

It is found in the cytoplasm. The enzyme catalyses adenosine(1518)/adenosine(1519) in 16S rRNA + 4 S-adenosyl-L-methionine = N(6)-dimethyladenosine(1518)/N(6)-dimethyladenosine(1519) in 16S rRNA + 4 S-adenosyl-L-homocysteine + 4 H(+). In terms of biological role, specifically dimethylates two adjacent adenosines (A1518 and A1519) in the loop of a conserved hairpin near the 3'-end of 16S rRNA in the 30S particle. May play a critical role in biogenesis of 30S subunits. The protein is Ribosomal RNA small subunit methyltransferase A of Rhodopseudomonas palustris (strain BisB18).